Consider the following 1401-residue polypeptide: DNA-directed RNA polymerase subunit beta (1401 aa).

Belongs to the RNA polymerase beta chain family. The RNAP catalytic core consists of 2 alpha, 1 beta, 1 beta' and 1 omega subunit. When a sigma factor is associated with the core the holoenzyme is formed, which can initiate transcription.

The catalysed reaction is RNA(n) + a ribonucleoside 5'-triphosphate = RNA(n+1) + diphosphate. In terms of biological role, DNA-dependent RNA polymerase catalyzes the transcription of DNA into RNA using the four ribonucleoside triphosphates as substrates. This chain is DNA-directed RNA polymerase subunit beta, found in Zymomonas mobilis subsp. mobilis (strain ATCC 31821 / ZM4 / CP4).